The primary structure comprises 416 residues: UV excision repair protein RAD23 homolog B (416 aa).

The region spanning 1–79 is the Ubiquitin-like domain; it reads MQVTLKTLQQ…VVVMVTKPKA (79 aa). Over residues 83–111 the composition is skewed to low complexity; the sequence is AVPATTQPSSTPSPTAVSSSPAVAAAQAP. The disordered stretch occupies residues 83–175; the sequence is AVPATTQPSS…STPGDSSRSN (93 aa). Positions 112-121 are enriched in pro residues; sequence APTPALPPTS. Residues 122 to 143 show a composition bias toward low complexity; the sequence is TPASTAPASTTASSEPAPAGAT. Thr-155 is subject to Phosphothreonine. Phosphoserine occurs at positions 160 and 174. A Phosphothreonine modification is found at Thr-186. One can recognise a UBA 1 domain in the interval 188–228; sequence QSYENMVTEIMSMGYEREQVIAALRASFNNPDRAVEYLLMG. Ser-199 is modified (phosphoserine). Tyr-202 bears the Phosphotyrosine mark. In terms of domain architecture, STI1 spans 274–317; sequence HPLEFLRNQPQFQQMRQIIQQNPSLLPALLQQIGRENPQLLQQI. Residues 333–356 form a disordered region; it reads QEAGSQGGGGGGGGGGGGGGGGGI. Over residues 337–356 the composition is skewed to gly residues; that stretch reads SQGGGGGGGGGGGGGGGGGI. One can recognise a UBA 2 domain in the interval 371-411; the sequence is PQEKEAIERLKALGFPEGLVIQAYFACEKNENLAANFLLQQ.

It belongs to the RAD23 family. Component of the XPC complex composed of XPC, RAD23B and CETN2. Interacts with NGLY1 and PSMC1. Interacts with ATXN3. Interacts with AMFR. Interacts with VCP; the interaction is indirect and mediated by NGLY1.

Its subcellular location is the nucleus. It is found in the cytoplasm. Its function is as follows. Multiubiquitin chain receptor involved in modulation of proteasomal degradation. Binds to polyubiquitin chains. Proposed to be capable to bind simultaneously to the 26S proteasome and to polyubiquitinated substrates and to deliver ubiquitinated proteins to the proteasome. May play a role in endoplasmic reticulum-associated degradation (ERAD) of misfolded glycoproteins by association with PNGase and delivering deglycosylated proteins to the proteasome. Involved in global genome nucleotide excision repair (GG-NER) by acting as component of the XPC complex. Cooperatively with Cetn2 appears to stabilize Xpc. May protect Xpc from proteasomal degradation. In terms of biological role, the XPC complex is proposed to represent the first factor bound at the sites of DNA damage and together with other core recognition factors, Xpa, RPA and the TFIIH complex, is part of the pre-incision (or initial recognition) complex. The XPC complex recognizes a wide spectrum of damaged DNA characterized by distortions of the DNA helix such as single-stranded loops, mismatched bubbles or single-stranded overhangs. The orientation of XPC complex binding appears to be crucial for inducing a productive NER. XPC complex is proposed to recognize and to interact with unpaired bases on the undamaged DNA strand which is followed by recruitment of the TFIIH complex and subsequent scanning for lesions in the opposite strand in a 5'-to-3' direction by the NER machinery. Cyclobutane pyrimidine dimers (CPDs) which are formed upon UV-induced DNA damage esacpe detection by the XPC complex due to a low degree of structural perurbation. Instead they are detected by the UV-DDB complex which in turn recruits and cooperates with the XPC complex in the respective DNA repair. In vitro, the Xpc:Rad23b dimer is sufficient to initiate NER; it preferentially binds to cisplatin and UV-damaged double-stranded DNA and also binds to a variety of chemically and structurally diverse DNA adducts. Xpc:Rad23b contacts DNA both 5' and 3' of a cisplatin lesion with a preference for the 5' side. Xpc:Rad23bB induces a bend in DNA upon binding. Xpc:Rad23b stimulates the activity of DNA glycosylases Tdg and Smug1. This is UV excision repair protein RAD23 homolog B (Rad23b) from Mus musculus (Mouse).